The sequence spans 141 residues: Galactose-6-phosphate isomerase subunit LacA 1 (141 aa).

This sequence belongs to the LacAB/RpiB family. Heteromultimeric protein consisting of LacA and LacB.

The catalysed reaction is aldehydo-D-galactose 6-phosphate = keto-D-tagatose 6-phosphate. The protein operates within carbohydrate metabolism; D-galactose 6-phosphate degradation; D-tagatose 6-phosphate from D-galactose 6-phosphate: step 1/1. In Streptococcus pyogenes serotype M1, this protein is Galactose-6-phosphate isomerase subunit LacA 1.